Consider the following 361-residue polypeptide: tRNA 2-selenouridine synthase (361 aa).

Positions 11-134 (ALLERPLIDV…MRQCVNAEIE (124 aa)) constitute a Rhodanese domain. The active-site S-selanylcysteine intermediate is Cys-94.

The protein belongs to the SelU family. In terms of assembly, monomer.

The enzyme catalyses 5-methylaminomethyl-2-thiouridine(34) in tRNA + selenophosphate + (2E)-geranyl diphosphate + H2O + H(+) = 5-methylaminomethyl-2-selenouridine(34) in tRNA + (2E)-thiogeraniol + phosphate + diphosphate. It catalyses the reaction 5-methylaminomethyl-2-thiouridine(34) in tRNA + (2E)-geranyl diphosphate = 5-methylaminomethyl-S-(2E)-geranyl-thiouridine(34) in tRNA + diphosphate. It carries out the reaction 5-methylaminomethyl-S-(2E)-geranyl-thiouridine(34) in tRNA + selenophosphate + H(+) = 5-methylaminomethyl-2-(Se-phospho)selenouridine(34) in tRNA + (2E)-thiogeraniol. The catalysed reaction is 5-methylaminomethyl-2-(Se-phospho)selenouridine(34) in tRNA + H2O = 5-methylaminomethyl-2-selenouridine(34) in tRNA + phosphate. Involved in the post-transcriptional modification of the uridine at the wobble position (U34) of tRNA(Lys), tRNA(Glu) and tRNA(Gln). Catalyzes the conversion of 2-thiouridine (S2U-RNA) to 2-selenouridine (Se2U-RNA). Acts in a two-step process involving geranylation of 2-thiouridine (S2U) to S-geranyl-2-thiouridine (geS2U) and subsequent selenation of the latter derivative to 2-selenouridine (Se2U) in the tRNA chain. This chain is tRNA 2-selenouridine synthase, found in Chromohalobacter salexigens (strain ATCC BAA-138 / DSM 3043 / CIP 106854 / NCIMB 13768 / 1H11).